Here is a 493-residue protein sequence, read N- to C-terminus: Galactose-1-phosphate uridylyltransferase (493 aa).

It belongs to the galactose-1-phosphate uridylyltransferase type 2 family.

It localises to the cytoplasm. The enzyme catalyses alpha-D-galactose 1-phosphate + UDP-alpha-D-glucose = alpha-D-glucose 1-phosphate + UDP-alpha-D-galactose. It functions in the pathway carbohydrate metabolism; galactose metabolism. The polypeptide is Galactose-1-phosphate uridylyltransferase (galT) (Streptococcus thermophilus).